We begin with the raw amino-acid sequence, 339 residues long: Fructose-1,6-bisphosphatase isozyme 2 (339 aa).

The interval 3–10 (DRSPFETD) is important for interaction with ALDOA. AMP is bound by residues valine 18 and 28 to 32 (TGELT). Mg(2+) is bound by residues aspartate 69 and glutamate 98. Residue 113–114 (KY) coordinates AMP. Mg(2+) is bound by residues aspartate 119, leucine 121, and aspartate 122. Aspartate 122 contributes to the substrate binding site. Residue arginine 141 participates in AMP binding. Positions 204 to 208 (KKKGK) match the Nuclear localization signal motif. 213–216 (NEGY) contacts substrate. Phosphotyrosine is present on residues tyrosine 216 and tyrosine 219. Residues 245-249 (YVGSM), tyrosine 265, and lysine 275 each bind substrate. Position 281 (glutamate 281) interacts with Mg(2+).

Belongs to the FBPase class 1 family. In terms of assembly, homotetramer. Interacts with ALDOA; the interaction blocks inhibition by physiological concentrations of AMP and reduces inhibition by Ca(2+). Interacts with alpha-actinin and F-actin. Mg(2+) is required as a cofactor.

The protein resides in the cell junction. Its subcellular location is the cytoplasm. It localises to the nucleus. The protein localises to the myofibril. It is found in the sarcomere. The protein resides in the z line. It catalyses the reaction beta-D-fructose 1,6-bisphosphate + H2O = beta-D-fructose 6-phosphate + phosphate. The protein operates within carbohydrate biosynthesis; gluconeogenesis. With respect to regulation, subject to complex allosteric regulation. The enzyme can assume an active R-state, or an inactive T-state. Intermediate conformations may exist. AMP acts as an allosteric inhibitor. Fructose 2,6-bisphosphate acts as a competitive inhibitor. Strongly inhibited by Ca(2+). In terms of biological role, catalyzes the hydrolysis of fructose 1,6-bisphosphate to fructose 6-phosphate in the presence of divalent cations and probably participates in glycogen synthesis from carbohydrate precursors, such as lactate. The sequence is that of Fructose-1,6-bisphosphatase isozyme 2 (FBP2) from Oryctolagus cuniculus (Rabbit).